The following is a 254-amino-acid chain: Wall-associated protein (254 aa).

The segment at 25–46 (DRVEPKEEPPKVPQAPKRDLKP) is disordered.

The protein localises to the secreted. Its subcellular location is the cell wall. This Geobacillus stearothermophilus (Bacillus stearothermophilus) protein is Wall-associated protein (wapA').